We begin with the raw amino-acid sequence, 736 residues long: 1,4-alpha-glucan branching enzyme GlgB (736 aa).

The active-site Nucleophile is Asp-415. Glu-470 acts as the Proton donor in catalysis.

This sequence belongs to the glycosyl hydrolase 13 family. GlgB subfamily. In terms of assembly, monomer.

It carries out the reaction Transfers a segment of a (1-&gt;4)-alpha-D-glucan chain to a primary hydroxy group in a similar glucan chain.. It functions in the pathway glycan biosynthesis; glycogen biosynthesis. In terms of biological role, catalyzes the formation of the alpha-1,6-glucosidic linkages in glycogen by scission of a 1,4-alpha-linked oligosaccharide from growing alpha-1,4-glucan chains and the subsequent attachment of the oligosaccharide to the alpha-1,6 position. In Burkholderia orbicola (strain AU 1054), this protein is 1,4-alpha-glucan branching enzyme GlgB.